Consider the following 305-residue polypeptide: Mitochondrial brown fat uncoupling protein 1 (305 aa).

At 1 to 10 the chain is on the mitochondrial intermembrane side; that stretch reads MVGHAATDVP. The helical transmembrane segment at 11 to 32 threads the bilayer; that stretch reads PTMAVKIFSAGVAACVADIITF. Solcar repeat units follow at residues 11–102, 109–199, and 208–293; these read PTMA…VQEF, ASLG…MKEA, and DDVP…LKRE. Residues 33-73 are Mitochondrial matrix-facing; it reads PLDTAKVRLQIQGECLTSSAFRYKGVLGTIITLAKTEGPVK. Lys56 contributes to the fatty acid 16:0 binding site. A helical transmembrane segment spans residues 74–96; it reads LYSGLPAGLQRQISFASLRIGLY. The Mitochondrial intermembrane portion of the chain corresponds to 97–114; the sequence is DTVQEFFTTGKEASLGSK. A helical membrane pass occupies residues 115–131; the sequence is ISAGLTTGGVAVFIGQP. Residues 132 to 176 are Mitochondrial matrix-facing; that stretch reads TEVVKVRLQAQSHLHGPKPRYTGTYNAYRIIATTEGLTGLWKGTT. Residues 177 to 193 traverse the membrane as a helical segment; the sequence is PNLTRNVIINCTELVTY. Residues 194 to 210 are Mitochondrial intermembrane-facing; that stretch reads DLMKEALVKNKLLADDV. A helical transmembrane segment spans residues 211-230; that stretch reads PCHFVSAVVAGFCTTVLSSP. The Mitochondrial matrix portion of the chain corresponds to 231-264; the sequence is VDVVKTRFVNSSPGQYTSVPNCAMMMLTREGPSA. Cys252 is modified (cysteine sulfenic acid (-SOH)). Residues 265 to 287 traverse the membrane as a helical segment; it reads FFKGFVPSFLRLGSWNIIMFVCF. Lys267 serves as a coordination point for fatty acid 16:0. Residues 288-305 are Mitochondrial intermembrane-facing; that stretch reads EQLKRELMKSRQAMDCAT.

This sequence belongs to the mitochondrial carrier (TC 2.A.29) family. Most probably functions as a monomer. Binds one purine nucleotide per monomer. However, has also been suggested to function as a homodimer or a homotetramer. Tightly associates with cardiolipin in the mitochondrion inner membrane; may stabilize and regulate its activity. May undergo sulfenylation upon cold exposure. May increase the sensitivity of UCP1 thermogenic function to the activation by noradrenaline probably through structural effects. In terms of processing, may undergo ubiquitin-mediated proteasomal degradation.

It localises to the mitochondrion inner membrane. The enzyme catalyses H(+)(in) = H(+)(out). Has no constitutive proton transporter activity and has to be activated by long-chain fatty acids/LCFAs. Inhibited by purine nucleotides. Both purine nucleotides and LCFAs bind the cytosolic side of the transporter and directly compete to activate or inhibit it. Activated by noradrenaline and reactive oxygen species. Despite lacking canonical translational encoding for selenocysteine, a small pool of the protein has been observed to selectively incorporate selenocysteine at 'Cys-252'. Selenocysteine-modified protein is highly sensitive to redox modification and may constitute a pool of protein highly sensitive to activation by elevated levels of reactive oxygen species (ROS). In terms of biological role, mitochondrial protein responsible for thermogenic respiration, a specialized capacity of brown adipose tissue and beige fat that participates in non-shivering adaptive thermogenesis to temperature and diet variations and more generally to the regulation of energy balance. Functions as a long-chain fatty acid/LCFA and proton symporter, simultaneously transporting one LCFA and one proton through the inner mitochondrial membrane. However, LCFAs remaining associated with the transporter via their hydrophobic tails, it results in an apparent transport of protons activated by LCFAs. Thereby, dissipates the mitochondrial proton gradient and converts the energy of substrate oxydation into heat instead of ATP. Regulates the production of reactive oxygen species/ROS by mitochondria. This is Mitochondrial brown fat uncoupling protein 1 from Ovis aries (Sheep).